The sequence spans 412 residues: Orcinol synthase (412 aa).

Residues cysteine 164, histidine 322, and asparagine 355 contribute to the active site.

Belongs to the thiolase-like superfamily. Chalcone/stilbene synthases family. Homodimer. As to expression, mainly expressed in young leaves, and barely in mature leaves and twigs.

The catalysed reaction is 3 malonyl-CoA + acetyl-CoA + 3 H(+) = orcinol + 4 CO2 + 4 CoA. It catalyses the reaction 3 malonyl-CoA + acetyl-CoA + 2 H(+) = orsellinate + 3 CO2 + 4 CoA. The enzyme catalyses 3 malonyl-CoA + acetyl-CoA + 3 H(+) = tetraacetate lactone + 3 CO2 + 4 CoA. It carries out the reaction 2 malonyl-CoA + acetyl-CoA + 2 H(+) = triacetate lactone + 2 CO2 + 3 CoA. The catalysed reaction is 3 malonyl-CoA + acetyl-CoA + 3 H(+) = 2-acetylphloroglucinol + 3 CO2 + 4 CoA. Its pathway is secondary metabolite biosynthesis; terpenoid biosynthesis. Its function is as follows. Involved in the biosynthesis of acetate-derived aromatic tetraketides natural products, precursors of daurichromenic acid, an anti-human immunodeficiency viruses (HIV) meroterpenoid consisting of sesquiterpene and orsellinic acid (OSA) moieties. Accepts acetyl-CoA as starter substrate and produces orcinol as the major reaction product, along with four minor products including OSA, tetraacetate lactone, triacetate lactone and 2-acetylphloroglucinol. The protein is Orcinol synthase of Rhododendron dauricum (Azalea daurica).